The primary structure comprises 137 residues: Large ribosomal subunit protein uL16 (137 aa).

It belongs to the universal ribosomal protein uL16 family. In terms of assembly, part of the 50S ribosomal subunit.

In terms of biological role, binds 23S rRNA and is also seen to make contacts with the A and possibly P site tRNAs. This is Large ribosomal subunit protein uL16 from Francisella tularensis subsp. holarctica (strain FTNF002-00 / FTA).